Consider the following 359-residue polypeptide: MSFDSNLEELYQKFCKLKSILEDPSQLSVDSFVAASKEYSELLPVISVIDQYNSLQKDIADLEELINNPETDHELKSLAKEEFYERQKQLPKIKNKLKLSLIPKDRDDARNAILEIRAGTGGEEAALFVTDLYRMYTKYAEQKNWKFEQINSSSTGIGGHKEVSLCISGSNVFARLKFESGVHRVQRVPETEASGRLHTSAATVAVLPEIEEVDLKIDEKDLRIDVYRSSGPGGQSVNTTDSAVRITHIPSGIVVIQQDEKSQHKNKNKALKVLRARLYNLEKQKRDSEISQMRKSQIGSGDRSERIRTYNFPQSRITDHRINLTLYRLEDIMKEGNLDEFIDALIAEDEANKLKNLHI.

Q235 bears the N5-methylglutamine mark. Positions 285-305 (KRDSEISQMRKSQIGSGDRSE) are disordered. The span at 290–299 (ISQMRKSQIG) shows a compositional bias: polar residues.

This sequence belongs to the prokaryotic/mitochondrial release factor family. In terms of processing, methylated by PrmC. Methylation increases the termination efficiency of RF1.

The protein resides in the cytoplasm. Its function is as follows. Peptide chain release factor 1 directs the termination of translation in response to the peptide chain termination codons UAG and UAA. This Ehrlichia canis (strain Jake) protein is Peptide chain release factor 1.